The following is a 610-amino-acid chain: Probable indole-3-acetic acid-amido synthetase GH3.1 (610 aa).

The protein belongs to the IAA-amido conjugating enzyme family. In terms of tissue distribution, expressed in flowers.

Its function is as follows. May catalyze the synthesis of indole-3-acetic acid (IAA)-amino acid conjugates, providing a mechanism for the plant to cope with the presence of excess auxin. The polypeptide is Probable indole-3-acetic acid-amido synthetase GH3.1 (GH3.1) (Oryza sativa subsp. japonica (Rice)).